We begin with the raw amino-acid sequence, 401 residues long: 8-amino-7-oxononanoate synthase (401 aa).

R24 is a binding site for substrate. Position 111 to 112 (111 to 112 (GF)) interacts with pyridoxal 5'-phosphate. H137 provides a ligand contact to substrate. Residues S183, H211, and T240 each coordinate pyridoxal 5'-phosphate. K243 is subject to N6-(pyridoxal phosphate)lysine. Substrate is bound at residue T357.

The protein belongs to the class-II pyridoxal-phosphate-dependent aminotransferase family. BioF subfamily. In terms of assembly, homodimer. Pyridoxal 5'-phosphate serves as cofactor.

It catalyses the reaction 6-carboxyhexanoyl-[ACP] + L-alanine + H(+) = (8S)-8-amino-7-oxononanoate + holo-[ACP] + CO2. The protein operates within cofactor biosynthesis; biotin biosynthesis. Functionally, catalyzes the decarboxylative condensation of pimeloyl-[acyl-carrier protein] and L-alanine to produce 8-amino-7-oxononanoate (AON), [acyl-carrier protein], and carbon dioxide. This chain is 8-amino-7-oxononanoate synthase, found in Xanthomonas oryzae pv. oryzae (strain MAFF 311018).